Reading from the N-terminus, the 297-residue chain is Beta-glucoside kinase (297 aa).

An ATP-binding site is contributed by 5–11; that stretch reads AFDIGGT.

This sequence belongs to the ROK (NagC/XylR) family. Homotetramer.

The enzyme catalyses D-cellobiose + ATP = 6-phospho-beta-D-glucosyl-(1-&gt;4)-D-glucose + ADP + H(+). Its activity is regulated as follows. Is inhibited by N-ethylmaleimide in vitro, but ATP affords considerable protection against the inhibitor. In terms of biological role, catalyzes the ATP-dependent phosphorylation of a wide variety of beta-D-glucosides, to produce 6-phospho-beta-D-glucosides including cellobiose-6'-P, gentiobiose-6'-P, cellobiitol-6-P, salicin-6-P, and arbutin-6-P. Is not able to phosphorylate alpha-D-glucosides. May have a dual role of kinase and transcriptional regulator of the cellobiose-PTS operon. The sequence is that of Beta-glucoside kinase (bglK) from Klebsiella pneumoniae.